A 380-amino-acid polypeptide reads, in one-letter code: GATOR1 complex protein NPRL2 (380 aa).

The interaction with PDPK1 stretch occupies residues 1-133 (MGSGCRIECI…SKQKLVPIMT (133 aa)). Arginine 78 contributes to the GDP binding site. At arginine 78 the chain carries Asymmetric dimethylarginine. Glycyl lysine isopeptide (Lys-Gly) (interchain with G-Cter in ubiquitin) cross-links involve residues lysine 158 and lysine 357.

It belongs to the NPR2 family. In terms of assembly, within the GATOR complex, component of the GATOR1 subcomplex, made of DEPDC5, NPRL2 and NPRL3. GATOR1 mediates the strong interaction of the GATOR complex with small GTPases Rag (RagA/RRAGA, RagB/RRAGB, RagC/RRAGC and/or RagD/RRAGD) heterodimers. GATOR1 interacts with GPR155/LYCHOS; interaction takes place in presence of cholesterol and prevents interaction between GATOR1 and KICSTOR. Interacts with PDPK1. In the presence of abundant amino acids, ubiquitinated at Lys-158 and Lys-357 via 'Lys-6'-linked ubiquitination by the WDR24 component of the GATOR2 complex, thereby inhibiting the GATOR1 complex and promoting mTORC1 activation. In terms of processing, asymmetric dimethylation at Arg-78 by PRMT1 inhibits the GTPase activator activity of the GATOR1 complex and consequently inducing timely mTORC1 activation under methionine-sufficient conditions. In terms of tissue distribution, most abundant in skeletal muscle, followed by brain, liver and pancreas, with lower amounts in lung, kidney, placenta and heart. Expressed in the frontal lobe cortex as well as in the temporal, parietal, and occipital lobes. Expressed in most lung cancer cell lines tested.

The protein resides in the lysosome membrane. In terms of biological role, catalytic component of the GATOR1 complex, a multiprotein complex that functions as an inhibitor of the amino acid-sensing branch of the mTORC1 pathway. In response to amino acid depletion, the GATOR1 complex has GTPase activating protein (GAP) activity and strongly increases GTP hydrolysis by RagA/RRAGA (or RagB/RRAGB) within heterodimeric Rag complexes, thereby turning them into their inactive GDP-bound form, releasing mTORC1 from lysosomal surface and inhibiting mTORC1 signaling. In the presence of abundant amino acids, the GATOR1 complex is ubiquitinated and inhibited by GATOR2. Within the GATOR1 complex, NPRL2 constitutes the catalytic subunit that mediates the GTPase activator activity and under methionine-sufficient conditions, the GTPase activator activity is inhibited by PRMT1 through methylation and consequently inducing timely mTORC1 activation. Suppresses Src-dependent tyrosine phosphorylation and activation of PDPK1 and its downstream signaling. Down-regulates PDPK1 kinase activity by interfering with tyrosine phosphorylation at 'Tyr-9', 'Tyr-373' and 'Tyr-376' residues. May act as a tumor suppressor. Suppresses cell growth and enhances sensitivity to various anticancer drugs. This is GATOR1 complex protein NPRL2 from Homo sapiens (Human).